A 123-amino-acid polypeptide reads, in one-letter code: Large ribosomal subunit protein bL12 (123 aa).

It belongs to the bacterial ribosomal protein bL12 family. Homodimer. Part of the ribosomal stalk of the 50S ribosomal subunit. Forms a multimeric L10(L12)X complex, where L10 forms an elongated spine to which 2 to 4 L12 dimers bind in a sequential fashion. Binds GTP-bound translation factors.

Functionally, forms part of the ribosomal stalk which helps the ribosome interact with GTP-bound translation factors. Is thus essential for accurate translation. This Cytophaga hutchinsonii (strain ATCC 33406 / DSM 1761 / CIP 103989 / NBRC 15051 / NCIMB 9469 / D465) protein is Large ribosomal subunit protein bL12.